The sequence spans 214 residues: Large ribosomal subunit protein uL1 (214 aa).

The protein belongs to the universal ribosomal protein uL1 family. Part of the 50S ribosomal subunit.

In terms of biological role, binds directly to 23S rRNA. Probably involved in E site tRNA release. Its function is as follows. Protein L1 is also a translational repressor protein, it controls the translation of its operon by binding to its mRNA. This Methanopyrus kandleri (strain AV19 / DSM 6324 / JCM 9639 / NBRC 100938) protein is Large ribosomal subunit protein uL1.